A 184-amino-acid chain; its full sequence is Ribosome maturation factor RimP (184 aa).

The protein belongs to the RimP family.

Its subcellular location is the cytoplasm. Required for maturation of 30S ribosomal subunits. This Zymomonas mobilis subsp. mobilis (strain ATCC 31821 / ZM4 / CP4) protein is Ribosome maturation factor RimP.